The primary structure comprises 435 residues: 5-methylthioadenosine/S-adenosylhomocysteine deaminase (435 aa).

Positions 65 and 67 each coordinate Zn(2+). Substrate is bound by residues Glu-94, Arg-150, and His-189. Zn(2+) is bound at residue His-216. Positions 219 and 304 each coordinate substrate. Asp-304 provides a ligand contact to Zn(2+).

This sequence belongs to the metallo-dependent hydrolases superfamily. MTA/SAH deaminase family. The cofactor is Zn(2+).

It catalyses the reaction S-adenosyl-L-homocysteine + H2O + H(+) = S-inosyl-L-homocysteine + NH4(+). The enzyme catalyses S-methyl-5'-thioadenosine + H2O + H(+) = S-methyl-5'-thioinosine + NH4(+). Its function is as follows. Catalyzes the deamination of 5-methylthioadenosine and S-adenosyl-L-homocysteine into 5-methylthioinosine and S-inosyl-L-homocysteine, respectively. Is also able to deaminate adenosine. This is 5-methylthioadenosine/S-adenosylhomocysteine deaminase from Bacillus cereus (strain 03BB102).